A 264-amino-acid polypeptide reads, in one-letter code: Undecaprenyl-diphosphatase (264 aa).

8 helical membrane passes run 1–21 (MTVF…FLPI), 40–60 (GLTF…AFFW), 81–101 (MFWY…LLEE), 109–129 (TPLL…WADA), 140–160 (ISMA…IPGV), 183–203 (FSFL…LKDI), 211–231 (AFIT…SFLL), and 239–259 (FALF…LAAA).

Belongs to the UppP family.

It is found in the cell membrane. It catalyses the reaction di-trans,octa-cis-undecaprenyl diphosphate + H2O = di-trans,octa-cis-undecaprenyl phosphate + phosphate + H(+). In terms of biological role, catalyzes the dephosphorylation of undecaprenyl diphosphate (UPP). Confers resistance to bacitracin. This Pelotomaculum thermopropionicum (strain DSM 13744 / JCM 10971 / SI) protein is Undecaprenyl-diphosphatase.